Consider the following 426-residue polypeptide: Enolase (426 aa).

Position 163 (glutamine 163) interacts with (2R)-2-phosphoglycerate. Glutamate 205 functions as the Proton donor in the catalytic mechanism. 3 residues coordinate Mg(2+): aspartate 242, glutamate 285, and aspartate 312. Residues lysine 337, arginine 366, serine 367, and lysine 388 each contribute to the (2R)-2-phosphoglycerate site. Lysine 337 functions as the Proton acceptor in the catalytic mechanism.

This sequence belongs to the enolase family. The cofactor is Mg(2+).

The protein localises to the cytoplasm. Its subcellular location is the secreted. The protein resides in the cell surface. The enzyme catalyses (2R)-2-phosphoglycerate = phosphoenolpyruvate + H2O. Its pathway is carbohydrate degradation; glycolysis; pyruvate from D-glyceraldehyde 3-phosphate: step 4/5. Catalyzes the reversible conversion of 2-phosphoglycerate (2-PG) into phosphoenolpyruvate (PEP). It is essential for the degradation of carbohydrates via glycolysis. This Desulfosudis oleivorans (strain DSM 6200 / JCM 39069 / Hxd3) (Desulfococcus oleovorans) protein is Enolase.